A 206-amino-acid chain; its full sequence is Pyridoxine/pyridoxamine 5'-phosphate oxidase (206 aa).

FMN-binding positions include 54–59 (RVVLLK), 69–70 (YT), Arg75, Lys76, and Gln98. Residue Lys59 coordinates substrate. Substrate is bound by residues Tyr116, Arg120, and Ser124. FMN contacts are provided by residues 133–134 (QS) and Trp178. Position 184–186 (184–186 (RLH)) interacts with substrate. Residue Arg188 participates in FMN binding.

It belongs to the pyridoxamine 5'-phosphate oxidase family. Homodimer. It depends on FMN as a cofactor.

The enzyme catalyses pyridoxamine 5'-phosphate + O2 + H2O = pyridoxal 5'-phosphate + H2O2 + NH4(+). It carries out the reaction pyridoxine 5'-phosphate + O2 = pyridoxal 5'-phosphate + H2O2. It participates in cofactor metabolism; pyridoxal 5'-phosphate salvage; pyridoxal 5'-phosphate from pyridoxamine 5'-phosphate: step 1/1. The protein operates within cofactor metabolism; pyridoxal 5'-phosphate salvage; pyridoxal 5'-phosphate from pyridoxine 5'-phosphate: step 1/1. In terms of biological role, catalyzes the oxidation of either pyridoxine 5'-phosphate (PNP) or pyridoxamine 5'-phosphate (PMP) into pyridoxal 5'-phosphate (PLP). This Anaplasma phagocytophilum (strain HZ) protein is Pyridoxine/pyridoxamine 5'-phosphate oxidase.